A 183-amino-acid chain; its full sequence is Probable RNA 2'-phosphotransferase (183 aa).

It belongs to the KptA/TPT1 family.

Functionally, removes the 2'-phosphate from RNA via an intermediate in which the phosphate is ADP-ribosylated by NAD followed by a presumed transesterification to release the RNA and generate ADP-ribose 1''-2''-cyclic phosphate (APPR&gt;P). May function as an ADP-ribosylase. This Clostridium perfringens (strain 13 / Type A) protein is Probable RNA 2'-phosphotransferase.